The primary structure comprises 333 residues: Homeobox protein Hox-D13 (333 aa).

The segment at 1 to 24 (MDGLRTDGGAAGAAPASSSSSSSV) is disordered. Positions 12-24 (GAAPASSSSSSSV) are enriched in low complexity. Positions 266-325 (GRKKRVPYTKLQLKELENEYAINKFINKDKRRRISAATNLSERQVTIWFQNRRVKDKKIV) form a DNA-binding region, homeobox.

Belongs to the Abd-B homeobox family.

Its subcellular location is the nucleus. Its function is as follows. Sequence-specific transcription factor that binds gene promoters and activates their transcription. Part of a developmental regulatory system that provides cells with specific positional identities on the anterior-posterior axis. The sequence is that of Homeobox protein Hox-D13 (HOXD13) from Carollia perspicillata (Seba's short-tailed bat).